A 590-amino-acid polypeptide reads, in one-letter code: RNA-binding protein 47 (590 aa).

Residues 1 to 21 (MTAEDSTTAMNSDPTVGSSTK) show a composition bias toward polar residues. The segment at 1–26 (MTAEDSTTAMNSDPTVGSSTKVPEGV) is disordered. 3 consecutive RRM domains span residues 71–149 (CEVF…CSVD), 151–233 (CRLF…WAEP), and 246–318 (KILY…LAKP). Arg396 and Arg407 each carry asymmetric dimethylarginine; alternate. Omega-N-methylarginine; alternate occurs at positions 396 and 407.

Belongs to the RRM RBM47 family. As to quaternary structure, homodimer. Interacts with A1CF. Interacts with APOBEC1; form an mRNA editing complex. Interacts with RBPMS.

It is found in the nucleus. It localises to the cytoplasm. Functionally, single-stranded RNA-binding protein that functions in a variety of RNA processes, including alternative splicing, RNA stabilization, and RNA editing. Functions as an enzyme-substrate adapter for the cytidine deaminase APOBEC1. With APOBEC1 forms an mRNA editing complex involved into cytidine to uridine editing of a variety of mRNA molecules. Through the binding of their 3'UTR, also stabilizes a variety of mRNAs and regulates the expression of genes such as the interferon alpha/beta receptor and interleukin-10. Also involved in the alternative splicing of several genes including TJP1. Binds the pre-mRNA (U)GCAUG consensus sequences in downstream intronic regions of alternative exons regulating their exclusion and inclusion into mRNAs. Independently of its RNA-binding activity, could negatively regulate MAVS by promoting its lysosomal degradation. This is RNA-binding protein 47 from Rattus norvegicus (Rat).